A 377-amino-acid chain; its full sequence is MTNATGPQMAYYGAASMDFGYPEGVSIVDFVRPEIKPYVHQHWYNYPPVNPMWHYLLGVIYLFLGTVSIFGNGLVIYLFNKSAALRTPANILVVNLALSDLIMLTTNVPFFTYNCFSGGVWMFSPQYCEIYACLGAITGVCSIWLLCMISFDRYNIICNGFNGPKLTTGKAVVFALISWVIAIGCALPPFFGWGNYILEGILDSCSYDYLTQDFNTFSYNIFIFVFDYFLPAAIIVFSYVFIVKAIFAHEAAMRAQAKKMNVSTLRSNEADAQRAEIRIAKTALVNVSLWFICWTPYALISLKGVMGDTSGITPLVSTLPALLAKSCSCYNPFVYAISHPKYRLAITQHLPWFCVHETETKSNDDSQSNSTVAQDKA.

The Extracellular segment spans residues 1–53 (MTNATGPQMAYYGAASMDFGYPEGVSIVDFVRPEIKPYVHQHWYNYPPVNPMW). The N-linked (GlcNAc...) asparagine glycan is linked to asparagine 3. The helical transmembrane segment at 54-78 (HYLLGVIYLFLGTVSIFGNGLVIYL) threads the bilayer. Residues 79-90 (FNKSAALRTPAN) lie on the Cytoplasmic side of the membrane. Residues 91–115 (ILVVNLALSDLIMLTTNVPFFTYNC) form a helical membrane-spanning segment. At 116–131 (FSGGVWMFSPQYCEIY) the chain is on the extracellular side. Cysteine 128 and cysteine 205 form a disulfide bridge. Residues 132-151 (ACLGAITGVCSIWLLCMISF) traverse the membrane as a helical segment. The Cytoplasmic portion of the chain corresponds to 152 to 170 (DRYNIICNGFNGPKLTTGK). Residues 171 to 194 (AVVFALISWVIAIGCALPPFFGWG) traverse the membrane as a helical segment. Over 195–218 (NYILEGILDSCSYDYLTQDFNTFS) the chain is Extracellular. Residues 219-246 (YNIFIFVFDYFLPAAIIVFSYVFIVKAI) traverse the membrane as a helical segment. The Cytoplasmic segment spans residues 247–281 (FAHEAAMRAQAKKMNVSTLRSNEADAQRAEIRIAK). Residues 282-305 (TALVNVSLWFICWTPYALISLKGV) traverse the membrane as a helical segment. Topologically, residues 306-313 (MGDTSGIT) are extracellular. Residues 314–338 (PLVSTLPALLAKSCSCYNPFVYAIS) traverse the membrane as a helical segment. Lysine 325 is modified (N6-(retinylidene)lysine). Residues 339–377 (HPKYRLAITQHLPWFCVHETETKSNDDSQSNSTVAQDKA) are Cytoplasmic-facing.

It belongs to the G-protein coupled receptor 1 family. Opsin subfamily. In terms of processing, phosphorylated on some or all of the serine and threonine residues present in the C-terminal region. In terms of tissue distribution, expressed in all of the seven retinular cells (R1-R7) forming the main rhabdom in each ommatidium.

Its subcellular location is the membrane. Its function is as follows. Visual pigments are the light-absorbing molecules that mediate vision. They consist of an apoprotein, opsin, covalently linked to cis-retinal. This opsin produces visual pigments with maximal absorption in the blue-green region of the spectrum. This is Compound eye opsin BCRH2 from Hemigrapsus sanguineus (Asian shore crab).